The following is a 489-amino-acid chain: MTAQSAQPLYIGGRPVDATSGETFTVTNPYDGSLLATIGQASQADVDSAVQAAQRGQREWAAMTGMERSRILLRAVALLRERNDELAELETRNTGKPISETASVDIVTGADALEYYAGLAPAIEGSQIPLRDTRLVYTRREPLGVIGAIGAWNYPIQIACWKAAPALAAGNAIVFKPSEVTPLTALKLAEIFTEAGLPDGVFNVVQGDGRVGAMLTEHEGIAKVSFTGEVGTGKKVMAAAGGSTLKDVTMELGGKSPLIVFADADLDRAADAAMMANFYSSGQICTNGTRVFVERSAKEAFEAKLVERVARIKAGDPMDPSVNFGPLVSFEHQEKVLSYIALGKEQGARVLAGGDAWNSGEWAKGAWAAPTVFTDCTDEMRVVKEEIFGPVMSVLAFDDEEEVIRRANNTKYGLAAGVFSESLNRAHRVIHQLEAGICWINTWGESPSEMPVGGYKESGIGRENGVETLNHYTQTKSVQIEMGPFESVF.

Asparagine 93 lines the K(+) pocket. Glycine 150–tryptophan 152 lines the NAD(+) pocket. The Charge relay system role is filled by lysine 162. Residue lysine 176 to glutamate 179 coordinates NAD(+). K(+) is bound at residue valine 180. An NAD(+)-binding site is contributed by glutamate 229–threonine 232. Leucine 245 is a binding site for K(+). Glutamate 251 functions as the Proton acceptor in the catalytic mechanism. NAD(+) is bound by residues glycine 253, cysteine 285, and glutamate 386. The Nucleophile role is filled by cysteine 285. At cysteine 285 the chain carries Cysteine sulfenic acid (-SOH). 2 residues coordinate K(+): lysine 456 and glycine 459. Catalysis depends on glutamate 463, which acts as the Charge relay system.

Belongs to the aldehyde dehydrogenase family. As to quaternary structure, dimer of dimers. K(+) is required as a cofactor.

The catalysed reaction is betaine aldehyde + NAD(+) + H2O = glycine betaine + NADH + 2 H(+). Its pathway is amine and polyamine biosynthesis; betaine biosynthesis via choline pathway; betaine from betaine aldehyde: step 1/1. Involved in the biosynthesis of the osmoprotectant glycine betaine. Catalyzes the irreversible oxidation of betaine aldehyde to the corresponding acid. This is Betaine aldehyde dehydrogenase from Chromohalobacter salexigens (strain ATCC BAA-138 / DSM 3043 / CIP 106854 / NCIMB 13768 / 1H11).